A 310-amino-acid polypeptide reads, in one-letter code: MSWLDKIVPSMSRTQRADRRKSVPDGLWRKCPNCEAVLYLPELERHQSVCPKCDHHLRLTARKRLNWFLDTEGREEIAADLQPVDRLKFRDSKKYKDRLAAAQKETDENDALIAMRGKLDGLPVVAVAFEFSFMGGSMGAVVGEKFVRAATQAREEGVPLVCFAASGGARMQEALFSLMQMAKTSAALEKLKQEGVPYISVLTDPVFGGVSASLAMLGDINVAEPNALIGFAGPRVIEQTVREQLPEGFQRSEFLLEHGTVDMIVHRHDMRERLGSVMRKLTHQPHQDRDAEPDDTASQSTLDEFSQADH.

Positions 27–296 (LWRKCPNCEA…QDRDAEPDDT (270 aa)) constitute a CoA carboxyltransferase N-terminal domain. Cys31, Cys34, Cys50, and Cys53 together coordinate Zn(2+). The C4-type zinc-finger motif lies at 31–53 (CPNCEAVLYLPELERHQSVCPKC). Positions 282-310 (THQPHQDRDAEPDDTASQSTLDEFSQADH) are disordered.

The protein belongs to the AccD/PCCB family. As to quaternary structure, acetyl-CoA carboxylase is a heterohexamer composed of biotin carboxyl carrier protein (AccB), biotin carboxylase (AccC) and two subunits each of ACCase subunit alpha (AccA) and ACCase subunit beta (AccD). Zn(2+) serves as cofactor.

It is found in the cytoplasm. It catalyses the reaction N(6)-carboxybiotinyl-L-lysyl-[protein] + acetyl-CoA = N(6)-biotinyl-L-lysyl-[protein] + malonyl-CoA. Its pathway is lipid metabolism; malonyl-CoA biosynthesis; malonyl-CoA from acetyl-CoA: step 1/1. In terms of biological role, component of the acetyl coenzyme A carboxylase (ACC) complex. Biotin carboxylase (BC) catalyzes the carboxylation of biotin on its carrier protein (BCCP) and then the CO(2) group is transferred by the transcarboxylase to acetyl-CoA to form malonyl-CoA. The sequence is that of Acetyl-coenzyme A carboxylase carboxyl transferase subunit beta from Chromohalobacter salexigens (strain ATCC BAA-138 / DSM 3043 / CIP 106854 / NCIMB 13768 / 1H11).